A 334-amino-acid polypeptide reads, in one-letter code: Fructose-1,6-bisphosphatase class 1 (334 aa).

Glu89, Asp112, Leu114, and Asp115 together coordinate Mg(2+). Residues 115-118 (DGSS), Asn208, Tyr241, 259-261 (YLY), and Lys271 each bind substrate. Glu277 is a binding site for Mg(2+).

Belongs to the FBPase class 1 family. As to quaternary structure, homotetramer. The cofactor is Mg(2+).

The protein localises to the cytoplasm. The enzyme catalyses beta-D-fructose 1,6-bisphosphate + H2O = beta-D-fructose 6-phosphate + phosphate. It functions in the pathway carbohydrate biosynthesis; gluconeogenesis. In Pectobacterium atrosepticum (strain SCRI 1043 / ATCC BAA-672) (Erwinia carotovora subsp. atroseptica), this protein is Fructose-1,6-bisphosphatase class 1.